A 412-amino-acid polypeptide reads, in one-letter code: MGSPWNGSDGPEGAREPPWPALPPCDERRCSPFPLGALVPVTAVCLCLFVVGVSGNVVTVMLIGRYRDMRTTTNLYLGSMAVSDLLILLGLPFDLYRLWRSRPWVFGPLLCRLSLYVGEGCTYATLLHMTALSVERYLAICRPLRARVLVTRRRVRALIAVLWAVALLSAGPFLFLVGVEQDPGISVVPGLNGTARIASSPLASSPPLWLSRAPPPSPPSGPETAEAAALFSRECRPSPAQLGALRVMLWVTTAYFFLPFLCLSILYGLIGRELWSSRRPLRGPAASGRERGHRQTVRVLLVVVLAFIICWLPFHVGRIIYINTEDSRMMYFSQYFNIVALQLFYLSASINPILYNLISKKYRAAAFKLLLARKSRPRGFHRSRDTAGEVAGDTGGDTVGYTETSANVKTMG.

Residues 1–35 lie on the Extracellular side of the membrane; it reads MGSPWNGSDGPEGAREPPWPALPPCDERRCSPFPL. Residue N6 is glycosylated (N-linked (GlcNAc...) asparagine). Residues 36–56 form a helical membrane-spanning segment; it reads GALVPVTAVCLCLFVVGVSGN. Residues 57 to 74 lie on the Cytoplasmic side of the membrane; that stretch reads VVTVMLIGRYRDMRTTTN. The helical transmembrane segment at 75–94 threads the bilayer; it reads LYLGSMAVSDLLILLGLPFD. Residues 95 to 112 are Extracellular-facing; the sequence is LYRLWRSRPWVFGPLLCR. An intrachain disulfide couples C111 to C235. Residues 113–134 form a helical membrane-spanning segment; sequence LSLYVGEGCTYATLLHMTALSV. The Cytoplasmic segment spans residues 135–157; sequence ERYLAICRPLRARVLVTRRRVRA. A helical transmembrane segment spans residues 158–178; it reads LIAVLWAVALLSAGPFLFLVG. The Extracellular portion of the chain corresponds to 179–246; sequence VEQDPGISVV…PSPAQLGALR (68 aa). N-linked (GlcNAc...) asparagine glycosylation is present at N192. The helical transmembrane segment at 247-270 threads the bilayer; sequence VMLWVTTAYFFLPFLCLSILYGLI. The Cytoplasmic portion of the chain corresponds to 271–298; the sequence is GRELWSSRRPLRGPAASGRERGHRQTVR. The chain crosses the membrane as a helical span at residues 299 to 320; the sequence is VLLVVVLAFIICWLPFHVGRII. Residues 321 to 334 are Extracellular-facing; the sequence is YINTEDSRMMYFSQ. A helical membrane pass occupies residues 335-358; that stretch reads YFNIVALQLFYLSASINPILYNLI. Residues 359–412 are Cytoplasmic-facing; it reads SKKYRAAAFKLLLARKSRPRGFHRSRDTAGEVAGDTGGDTVGYTETSANVKTMG.

The protein belongs to the G-protein coupled receptor 1 family. Expressed only in thyroid, stomach, and bone marrow.

It is found in the cell membrane. Receptor for motilin. The protein is Motilin receptor (MLNR) of Homo sapiens (Human).